The chain runs to 589 residues: 5'-AMP-activated protein kinase catalytic subunit alpha-1 (589 aa).

The Protein kinase domain occupies 24 to 276; that stretch reads FVIKETIGKG…VKRIVNHSWF (253 aa). ATP is bound by residues 30–38 and lysine 53; that span reads IGKGAFGAV. Aspartate 147 acts as the Proton acceptor in catalysis.

This sequence belongs to the protein kinase superfamily. CAMK Ser/Thr protein kinase family. SNF1 subfamily.

It carries out the reaction L-seryl-[protein] + ATP = O-phospho-L-seryl-[protein] + ADP + H(+). The catalysed reaction is L-threonyl-[protein] + ATP = O-phospho-L-threonyl-[protein] + ADP + H(+). Probably does not act as a sensor that couples lifespan to information about energy levels and insulin-like signals. Together with aak-2, involved in the establishment of germline stem cell (GSC) quiescence during dauer development. Plays a role in the maintenance of glycogen stores which are necessary for resistance to hyperosmotic stress. The sequence is that of 5'-AMP-activated protein kinase catalytic subunit alpha-1 (aak-1) from Caenorhabditis elegans.